The chain runs to 702 residues: Elongation factor G (702 aa).

The region spanning cysteine 8 to asparagine 290 is the tr-type G domain. GTP is bound by residues alanine 17–threonine 24, aspartate 88–histidine 92, and asparagine 142–aspartate 145.

The protein belongs to the TRAFAC class translation factor GTPase superfamily. Classic translation factor GTPase family. EF-G/EF-2 subfamily.

The protein localises to the cytoplasm. Catalyzes the GTP-dependent ribosomal translocation step during translation elongation. During this step, the ribosome changes from the pre-translocational (PRE) to the post-translocational (POST) state as the newly formed A-site-bound peptidyl-tRNA and P-site-bound deacylated tRNA move to the P and E sites, respectively. Catalyzes the coordinated movement of the two tRNA molecules, the mRNA and conformational changes in the ribosome. The polypeptide is Elongation factor G (Buchnera aphidicola subsp. Schizaphis graminum (strain Sg)).